The chain runs to 644 residues: uncharacterized protein (644 aa).

The helical transmembrane segment at 16-38 (LLSYLGVVGVGIAGLCIYRSVWG) threads the bilayer. Residues 586–603 (VRQLQKEAGEGEAEEHPR) are compositionally biased toward basic and acidic residues. Residues 586–613 (VRQLQKEAGEGEAEEHPRARPAAGKAQR) are disordered.

Its subcellular location is the membrane. This is an uncharacterized protein from Treponema pallidum (strain Nichols).